We begin with the raw amino-acid sequence, 141 residues long: Large ribosomal subunit protein uL16 (141 aa).

The interval 1 to 23 is disordered; the sequence is MLMPKRTKWRKQQKGRNRGKSFR.

It belongs to the universal ribosomal protein uL16 family. In terms of assembly, part of the 50S ribosomal subunit.

Binds 23S rRNA and is also seen to make contacts with the A and possibly P site tRNAs. The protein is Large ribosomal subunit protein uL16 of Sulfurovum sp. (strain NBC37-1).